The following is a 645-amino-acid chain: MESPAFSKPLKDKINPWGPLIIMGILVRAGASVQRDSPHQVFNVTWKITNLMTGQTANATSLLGTMTDTFPKLYFDLCDLVGDNWDDPEPDIGDGCRSPGGRKRTRLYDFYVCPGHTVLTGCGGPREGYCGKWGCETTGQAYWKPSSSWDLISLKRGNTPKGQGPCFDSSVGSGSIQGATPGGRCNPLVLEFTDAGKRASWDAPKTWGLRLYRSTGADPVTLFSLTRQVLNVGPRVPIGPNPVITEQLPPSQPVQIMLPRPPRPPPSGAASMVPGAPPPSQQPGTGDRLLNLVEGAYQALNLTSPDKTQECWLCLVSGPPYYEGVAVLGTYSNHTSAPANCSVTSQHKLTLSEVTGQGLCIGAVPKTHQALCNTTQKTSDGSYYLASPAGTIWACSTGLTPCLSTTVLNLTTDYCVLVELWPKVTYHSPNYVYGQFGKKTKYKREPVSLTLALLLGGLTMGGIAAGVGTGTTALVATKQFEQLQAAIHTDLGALEKSVSALEKSLTSLSEVVLQNRRGLDLLFLKEGGLCAALKKECCFYADHTGVVRDSMAKLRERLNQRQKLFESGQGWFEGLFNRSPWFTTLISTIMGPLIVLLLILLFGPCILNRLVQFVKDRISVVQALVLTQQYHQLKSIDPEEVESRE.

The first 33 residues, 1-33, serve as a signal peptide directing secretion; sequence MESPAFSKPLKDKINPWGPLIIMGILVRAGASV. The receptor-binding domain (RBD) stretch occupies residues 32–237; it reads SVQRDSPHQV…QVLNVGPRVP (206 aa). At 34–585 the chain is on the extracellular side; the sequence is QRDSPHQVFN…FNRSPWFTTL (552 aa). Asparagine 43 and asparagine 58 each carry an N-linked (GlcNAc...) asparagine; by host glycan. Disulfide bonds link cysteine 113–cysteine 130 and cysteine 122–cysteine 135. A disordered region spans residues 259-286; it reads PRPPRPPPSGAASMVPGAPPPSQQPGTG. Asparagine 301 carries an N-linked (GlcNAc...) asparagine; by host glycan. Cystine bridges form between cysteine 311–cysteine 314, cysteine 311–cysteine 538, cysteine 341–cysteine 395, cysteine 360–cysteine 372, cysteine 402–cysteine 415, and cysteine 530–cysteine 537. The CXXC signature appears at 311–314; that stretch reads CWLC. 2 N-linked (GlcNAc...) asparagine; by host glycosylation sites follow: asparagine 333 and asparagine 340. N-linked (GlcNAc...) asparagine; by host glycosylation is found at asparagine 373 and asparagine 409. The interval 447–467 is fusion peptide; sequence VSLTLALLLGGLTMGGIAAGV. Positions 490-510 form a coiled coil; that stretch reads DLGALEKSVSALEKSLTSLSE. The immunosuppression stretch occupies residues 513-529; it reads LQNRRGLDLLFLKEGGL. A CX6CC motif is present at residues 530–538; sequence CAALKKECC. A helical transmembrane segment spans residues 586 to 606; sequence ISTIMGPLIVLLLILLFGPCI. Cysteine 605 is lipidated: S-palmitoyl cysteine; by host. Over 607–640 the chain is Cytoplasmic; it reads LNRLVQFVKDRISVVQALVLTQQYHQLKSIDPEE. The YXXL motif; contains endocytosis signal motif lies at 630-633; the sequence is YHQL.

As to quaternary structure, the mature envelope protein (Env) consists of a trimer of SU-TM heterodimers attached by a labile interchain disulfide bond. The activated Env consists of SU monomers and TM trimers. In terms of processing, specific enzymatic cleavages in vivo yield mature proteins. Envelope glycoproteins are synthesized as an inactive precursor that is N-glycosylated and processed likely by host cell furin or by a furin-like protease in the Golgi to yield the mature SU and TM proteins. The cleavage site between SU and TM requires the minimal sequence [KR]-X-[KR]-R. The R-peptide is released from the C-terminus of the cytoplasmic tail of the TM protein upon particle formation as a result of proteolytic cleavage by the viral protease. Cleavage of this peptide is required for TM to become fusogenic. Post-translationally, the CXXC motif is highly conserved across a broad range of retroviral envelope proteins. It is thought to participate in the formation of a labile disulfide bond possibly with the CX6CC motif present in the transmembrane protein. Isomerization of the intersubunit disulfide bond to an SU intrachain disulfide bond is thought to occur upon receptor recognition in order to allow membrane fusion. The transmembrane protein is palmitoylated. In terms of processing, the R-peptide is palmitoylated.

It localises to the virion membrane. The protein localises to the host cell membrane. Its function is as follows. The surface protein (SU) attaches the virus to the host cell by binding to its receptor. This interaction activates a thiol in a CXXC motif of the C-terminal domain, where the other Cys residue participates in the formation of the intersubunit disulfide. The activated thiol will attack the disulfide and cause its isomerization into a disulfide isomer within the motif. This leads to SU displacement and TM refolding, and is thought to activate its fusogenic potential by unmasking its fusion peptide. Fusion occurs at the host cell plasma membrane. Functionally, the transmembrane protein (TM) acts as a class I viral fusion protein. Under the current model, the protein has at least 3 conformational states: pre-fusion native state, pre-hairpin intermediate state, and post-fusion hairpin state. During viral and target cell membrane fusion, the coiled coil regions (heptad repeats) assume a trimer-of-hairpins structure, positioning the fusion peptide in close proximity to the C-terminal region of the ectodomain. The formation of this structure appears to drive apposition and subsequent fusion of viral and target cell membranes. Membranes fusion leads to delivery of the nucleocapsid into the cytoplasm. In Xenotropic MuLV-related virus (isolate VP35) (XMRV), this protein is Envelope glycoprotein (env).